The following is a 146-amino-acid chain: Large-conductance mechanosensitive channel (146 aa).

The next 3 helical transmembrane spans lie at 21-41 (VGII…ADLI), 44-64 (VIGL…LGDG), and 83-103 (GAFI…FLLV).

It belongs to the MscL family. In terms of assembly, homopentamer.

Its subcellular location is the cell inner membrane. Channel that opens in response to stretch forces in the membrane lipid bilayer. May participate in the regulation of osmotic pressure changes within the cell. The chain is Large-conductance mechanosensitive channel from Cereibacter sphaeroides (strain ATCC 17025 / ATH 2.4.3) (Rhodobacter sphaeroides).